The following is an 80-amino-acid chain: Metallothionein-like protein BIF98 (80 aa).

The protein belongs to the metallothionein superfamily. Type 15 family.

Its function is as follows. Metallothioneins have a high content of cysteine residues that bind various heavy metals. The protein is Metallothionein-like protein BIF98 of Brassica rapa subsp. pekinensis (Chinese cabbage).